An 873-amino-acid polypeptide reads, in one-letter code: Polyribonucleotide nucleotidyltransferase (873 aa).

Residues D521 and D527 each coordinate Mg(2+). Residues 587–646 (PRIITTTVPVDKIGEVIGPKGKMINQIQEDTGAEIAIEDDGTVYISSEGGEAAEKAKQII) form the KH domain. The region spanning 658 to 730 (GETYKGTVVK…DRGKISLAIP (73 aa)) is the S1 motif domain. The segment at 727–873 (LAIPGFENQE…VRRDFDPFDD (147 aa)) is disordered. Over residues 742–857 (RRSDDRPRRD…EYREGREVRH (116 aa)) the composition is skewed to basic and acidic residues.

The protein belongs to the polyribonucleotide nucleotidyltransferase family. Mg(2+) is required as a cofactor.

The protein resides in the cytoplasm. It carries out the reaction RNA(n+1) + phosphate = RNA(n) + a ribonucleoside 5'-diphosphate. In terms of biological role, involved in mRNA degradation. Catalyzes the phosphorolysis of single-stranded polyribonucleotides processively in the 3'- to 5'-direction. This Bifidobacterium animalis subsp. lactis (strain AD011) protein is Polyribonucleotide nucleotidyltransferase.